Here is a 146-residue protein sequence, read N- to C-terminus: Snaclec mamushigin subunit beta (146 aa).

The signal sequence occupies residues 1–23; sequence MGRFIFLSFGLLVVFVSLSGTGA. Intrachain disulfides connect Cys25–Cys36, Cys53–Cys142, and Cys119–Cys134. Residues 32–143 enclose the C-type lectin domain; that stretch reads YEGHCYRVFQ…CSRTYNVVCK (112 aa).

Heterodimer of subunits alpha and beta; disulfide-linked. As to expression, expressed by the venom gland.

Its subcellular location is the secreted. Binds to platelet GPIbalpha (GP1BA) and enhances platelet aggregation at low-shear stress. At high-shear stress, blocks platelet aggregation in a dose-dependent manner. In Gloydius blomhoffii (Mamushi), this protein is Snaclec mamushigin subunit beta.